The chain runs to 324 residues: MSTDQYRRVVVITGLSGAGKSTILRALEDAGYETVDNPPLPLVHDLVARGEGPLAFAVDARSRGFTADGLALAMERMRQLPGVRADLVFVRADTAALLSRYTETRHRHPLASGVGVRDGIRAEEILTASLVDVADLVVDTTDLPVTRLRAMIAERYGPEETGQGMVVSLISFAYPKGLPREADLVLDARFLRNPHYDPTLKPRTGQDRDVAAYIEADPDYATFHDRIDALLRLLLPRFVQEGKKYATIAIGCTGGRHRSVHLVEKLGEELRAQGWSVLRTHRELGISDDAPQAGAARVSTDDRNGRPEEHGSAQAPDELSRTTS.

14-21 provides a ligand contact to ATP; the sequence is GLSGAGKS. 59–62 is a binding site for GTP; that stretch reads DARS. A disordered region spans residues 286-324; sequence ISDDAPQAGAARVSTDDRNGRPEEHGSAQAPDELSRTTS. The segment covering 299–311 has biased composition (basic and acidic residues); it reads STDDRNGRPEEHG.

Belongs to the RapZ-like family.

Displays ATPase and GTPase activities. The protein is Nucleotide-binding protein GbCGDNIH1_0395 of Granulibacter bethesdensis (strain ATCC BAA-1260 / CGDNIH1).